The following is a 439-amino-acid chain: NAD kinase (439 aa).

Serine 46, serine 48, serine 50, serine 55, and serine 64 each carry phosphoserine.

It belongs to the NAD kinase family. It depends on a divalent metal cation as a cofactor.

The enzyme catalyses NAD(+) + ATP = ADP + NADP(+) + H(+). The chain is NAD kinase (Nadk) from Mus musculus (Mouse).